The following is a 173-amino-acid chain: Large ribosomal subunit protein uL10 (173 aa).

The protein belongs to the universal ribosomal protein uL10 family. Part of the ribosomal stalk of the 50S ribosomal subunit. The N-terminus interacts with L11 and the large rRNA to form the base of the stalk. The C-terminus forms an elongated spine to which L12 dimers bind in a sequential fashion forming a multimeric L10(L12)X complex.

In terms of biological role, forms part of the ribosomal stalk, playing a central role in the interaction of the ribosome with GTP-bound translation factors. This Thermus thermophilus (strain ATCC BAA-163 / DSM 7039 / HB27) protein is Large ribosomal subunit protein uL10.